A 306-amino-acid chain; its full sequence is Probable C-terminal domain small phosphatase (306 aa).

Over residues 1 to 36 (MNSSPITQVSNPNDSLNHSSTNLIPSSHNSLNNYPQ) the composition is skewed to polar residues. Disordered stretches follow at residues 1-45 (MNSS…NRKK) and 61-116 (NDQN…NKDS). The segment covering 61-111 (NDQNNGNNINTDNGASNNDKLQQQKQYNQQQQQQYNQHQQQQQQQQQQQQY) has biased composition (low complexity). Positions 132-290 (RHVGLKTLVL…LDLLPLLDDL (159 aa)) constitute an FCP1 homology domain. Asp142 serves as the catalytic 4-aspartylphosphate intermediate. Mg(2+)-binding residues include Asp142, Asp144, and Asn253. Catalysis depends on Asp144, which acts as the Proton donor.

In terms of assembly, monomer. Requires Mg(2+) as cofactor.

Its subcellular location is the nucleus. The catalysed reaction is O-phospho-L-seryl-[protein] + H2O = L-seryl-[protein] + phosphate. The enzyme catalyses O-phospho-L-threonyl-[protein] + H2O = L-threonyl-[protein] + phosphate. May function as a phosphatase involved in the regulation of cell growth and differentiation. The protein is Probable C-terminal domain small phosphatase (fcpA) of Dictyostelium discoideum (Social amoeba).